The chain runs to 358 residues: Methylthioribose-1-phosphate isomerase (358 aa).

Substrate contacts are provided by residues 54-56 (RGA), Arg-96, and Gln-205. Asp-246 acts as the Proton donor in catalysis. 256 to 257 (NK) contributes to the substrate binding site.

It belongs to the eIF-2B alpha/beta/delta subunits family. MtnA subfamily.

It carries out the reaction 5-(methylsulfanyl)-alpha-D-ribose 1-phosphate = 5-(methylsulfanyl)-D-ribulose 1-phosphate. It functions in the pathway amino-acid biosynthesis; L-methionine biosynthesis via salvage pathway; L-methionine from S-methyl-5-thio-alpha-D-ribose 1-phosphate: step 1/6. Functionally, catalyzes the interconversion of methylthioribose-1-phosphate (MTR-1-P) into methylthioribulose-1-phosphate (MTRu-1-P). The sequence is that of Methylthioribose-1-phosphate isomerase from Stutzerimonas stutzeri (strain A1501) (Pseudomonas stutzeri).